A 427-amino-acid chain; its full sequence is Transcriptional enhancer factor TEF-3 (427 aa).

The tract at residues 1–32 (MTSNEWSSPDSPEGSSISGGSQALDKPIDNDA) is disordered. Low complexity predominate over residues 7–21 (SSPDSPEGSSISGGS). A DNA-binding region (TEA) is located at residues 29–105 (DNDAEGVWSP…QVLARRKARE (77 aa)). The Nuclear localization signal signature appears at 78–94 (IKLRTGKTRTRKQVSSH). The disordered stretch occupies residues 163–206 (QPGTSHDVKPFSQNTYPVQPPLPLPGFESPAGPTPSPSAPLAPP). Residues 194–205 (GPTPSPSAPLAP) are compositionally biased toward pro residues.

As to quaternary structure, interacts with WWTR1/TAZ. Interacts with YAP1. In terms of tissue distribution, preferentially expressed in lung and in skeletal muscle.

Its subcellular location is the nucleus. In terms of biological role, transcription factor which plays a key role in the Hippo signaling pathway, a pathway involved in organ size control and tumor suppression by restricting proliferation and promoting apoptosis. The core of this pathway is composed of a kinase cascade wherein MST1/MST2, in complex with its regulatory protein SAV1, phosphorylates and activates LATS1/2 in complex with its regulatory protein MOB1, which in turn phosphorylates and inactivates YAP1 oncoprotein and WWTR1/TAZ. Acts by mediating gene expression of YAP1 and WWTR1/TAZ, thereby regulating cell proliferation, migration and epithelial mesenchymal transition (EMT) induction. Binds specifically and non-cooperatively to the Sph and GT-IIC 'enhansons' (5'-GTGGAATGT-3') and activates transcription. Binds to the M-CAT motif. Might play a role in the embryonic development of skeletal muscle. This chain is Transcriptional enhancer factor TEF-3 (Tead4), found in Mus musculus (Mouse).